Reading from the N-terminus, the 475-residue chain is tRNA-2-methylthio-N(6)-dimethylallyladenosine synthase (475 aa).

Residues 1 to 10 show a composition bias toward basic and acidic residues; that stretch reads MHETTLKREG. Residues 1-25 form a disordered region; the sequence is MHETTLKREGASTPSNPTPSTHAAG. The span at 12–23 shows a compositional bias: polar residues; it reads STPSNPTPSTHA. One can recognise an MTTase N-terminal domain in the interval 27–144; it reads GKIYIRTFGC…LPELIRRRRD (118 aa). Cysteine 36, cysteine 73, cysteine 107, cysteine 181, cysteine 185, and cysteine 188 together coordinate [4Fe-4S] cluster. The Radical SAM core domain maps to 167–400; it reads RVEGATAFVS…QALINEQAAA (234 aa). The 64-residue stretch at 403–466 folds into the TRAM domain; that stretch reads QSMVGTRQRL…TNSLRGRVAG (64 aa).

Belongs to the methylthiotransferase family. MiaB subfamily. In terms of assembly, monomer. [4Fe-4S] cluster is required as a cofactor.

It localises to the cytoplasm. It carries out the reaction N(6)-dimethylallyladenosine(37) in tRNA + (sulfur carrier)-SH + AH2 + 2 S-adenosyl-L-methionine = 2-methylsulfanyl-N(6)-dimethylallyladenosine(37) in tRNA + (sulfur carrier)-H + 5'-deoxyadenosine + L-methionine + A + S-adenosyl-L-homocysteine + 2 H(+). In terms of biological role, catalyzes the methylthiolation of N6-(dimethylallyl)adenosine (i(6)A), leading to the formation of 2-methylthio-N6-(dimethylallyl)adenosine (ms(2)i(6)A) at position 37 in tRNAs that read codons beginning with uridine. The chain is tRNA-2-methylthio-N(6)-dimethylallyladenosine synthase from Bordetella avium (strain 197N).